We begin with the raw amino-acid sequence, 93 residues long: DNA/RNA-binding protein Alba (93 aa).

Residue K11 is modified to N6-acetyllysine.

Belongs to the histone-like Alba family. In terms of processing, acetylated. Acetylation at Lys-11 decreases DNA-binding affinity.

The protein localises to the cytoplasm. It localises to the chromosome. Its function is as follows. Binds double-stranded DNA tightly but without sequence specificity. Involved in DNA compaction. The protein is DNA/RNA-binding protein Alba of Pyrococcus abyssi (strain GE5 / Orsay).